Here is a 222-residue protein sequence, read N- to C-terminus: uncharacterized protein (222 aa).

Residues 1 to 20 (MRTTSFAKVAALCGLLALSG) form the signal peptide. Cys-21 carries N-palmitoyl cysteine lipidation. Cys-21 carries S-diacylglycerol cysteine lipidation.

Its subcellular location is the cell membrane. This is an uncharacterized protein from Escherichia coli O157:H7.